A 104-amino-acid polypeptide reads, in one-letter code: Vegetative-specific protein H7 (104 aa).

The region spanning 43–97 is the HTH cro/C1-type domain; it reads IQRARNALKMTQKELAFKINERPGVINEYESGSAIPSQAVLSKLEKALNVKLRGK. Positions 54 to 73 form a DNA-binding region, H-T-H motif; it reads QKELAFKINERPGVINEYES.

This chain is Vegetative-specific protein H7 (cinD-1), found in Dictyostelium discoideum (Social amoeba).